A 115-amino-acid chain; its full sequence is Dolichyl-diphosphooligosaccharide--protein glycosyltransferase subunit DAD2 (115 aa).

Over 1 to 31 (MVKSTSKDAQDLFHSLHSAYTATPTNLKIID) the chain is Cytoplasmic. Residues 32–52 (LYVCFAVFTALIQVAYMALVG) traverse the membrane as a helical segment. The Lumenal segment spans residues 53–55 (SFP). Residues 56–76 (FNSFLSGVLSCIGTAVLAVCL) form a helical membrane-spanning segment. Topologically, residues 77–94 (RIQVNKENKEFKDLAPER) are cytoplasmic. Residues 95-115 (AFADFVLCNLVLHLVIINFLG) form a helical membrane-spanning segment.

It belongs to the DAD/OST2 family. In terms of assembly, component of the oligosaccharyltransferase (OST) complex.

It localises to the endoplasmic reticulum membrane. The protein operates within protein modification; protein glycosylation. Functionally, subunit of the oligosaccharyl transferase (OST) complex that catalyzes the initial transfer of a defined glycan (Glc(3)Man(9)GlcNAc(2) in eukaryotes) from the lipid carrier dolichol-pyrophosphate to an asparagine residue within an Asn-X-Ser/Thr consensus motif in nascent polypeptide chains, the first step in protein N-glycosylation. N-glycosylation occurs cotranslationally and the complex associates with the Sec61 complex at the channel-forming translocon complex that mediates protein translocation across the endoplasmic reticulum (ER). All subunits are required for a maximal enzyme activity. This chain is Dolichyl-diphosphooligosaccharide--protein glycosyltransferase subunit DAD2 (DAD2), found in Arabidopsis thaliana (Mouse-ear cress).